Consider the following 409-residue polypeptide: MSDVKKAVLAYSGGLDTSVILKWLQDTYQCEVVTFTADLGQGEELEPARQKALKFGIKPDNIFIDDLREEFVRDFVFPMFRCNTVYEGEYLLGTSIARPLIAKRQIEIARATGADAVSHGATGKGNDQVRFELGYYALMPGVKVIAPWREWDLLSREKLLAYAEKHGIPIEMKHKQGGSPYSMDANLLHISFEGRHLENPAAEAEESMWRWTVSPEAAPDAAEYLDLEFERGDLVAINGTRMKAHELLAKLNELGGKHGIGRLDLVENRYVGMKSRGCYETPGGTILLRAHRAIESVTLDREVAHLKDDLMPRYASLIYNGYWWSPERRALQALIDNTQESVNGWVRVKLYKGNVIVTGRDSKTDSLFDPTIATFEDDQGAYNQKDAHGFIRLNALRMRIAANAQTKRG.

ATP is bound by residues 10–18 (AYSGGLDTS) and alanine 37. The L-citrulline site is built by tyrosine 90 and serine 95. Glycine 120 is a binding site for ATP. L-aspartate-binding residues include threonine 122, asparagine 126, and aspartate 127. Asparagine 126 serves as a coordination point for L-citrulline. L-citrulline contacts are provided by arginine 130, serine 182, serine 191, glutamate 267, and tyrosine 279.

Belongs to the argininosuccinate synthase family. Type 1 subfamily. Homotetramer.

It is found in the cytoplasm. The enzyme catalyses L-citrulline + L-aspartate + ATP = 2-(N(omega)-L-arginino)succinate + AMP + diphosphate + H(+). The protein operates within amino-acid biosynthesis; L-arginine biosynthesis; L-arginine from L-ornithine and carbamoyl phosphate: step 2/3. This chain is Argininosuccinate synthase, found in Aromatoleum aromaticum (strain DSM 19018 / LMG 30748 / EbN1) (Azoarcus sp. (strain EbN1)).